We begin with the raw amino-acid sequence, 253 residues long: Major prion protein (253 aa).

The first 22 residues, 1–22 (MANLGCWMLVLFVATWSDLGLC), serve as a signal peptide directing secretion. An interaction with ADGRG6 region spans residues 23-38 (KKRPKPGGWNTGGSRY). The interaction with GRB2, ERI3 and SYN1 stretch occupies residues 23 to 230 (KKRPKPGGWN…ESQAYYQRGS (208 aa)). The segment at 26-108 (PKPGGWNTGG…WNKPSKPKTN (83 aa)) is disordered. Tandem repeats lie at residues 51 to 59 (PQGGGGWGQ), 60 to 67 (PHGGGWGQ), 68 to 75 (PHGGGWGQ), 76 to 83 (PHGGGWGQ), and 84 to 91 (PHGGGWGQ). The interval 51-91 (PQGGGGWGQPHGGGWGQPHGGGWGQPHGGGWGQPHGGGWGQ) is 5 X 8 AA tandem repeats of P-H-G-G-G-W-G-Q. Residues 52-95 (QGGGGWGQPHGGGWGQPHGGGWGQPHGGGWGQPHGGGWGQGGGT) show a composition bias toward gly residues. The Cu(2+) site is built by H61, G62, G63, H69, G70, G71, H77, G78, G79, H85, G86, and G87. C179 and C214 form a disulfide bridge. N181 and N197 each carry an N-linked (GlcNAc...) asparagine glycan. Residue S230 is the site of GPI-anchor amidated serine attachment. The propeptide at 231 to 253 (SMVLFSSPPVILLISFLIFLIVG) is removed in mature form.

It belongs to the prion family. As to quaternary structure, monomer and homodimer. Has a tendency to aggregate into amyloid fibrils containing a cross-beta spine, formed by a steric zipper of superposed beta-strands. Soluble oligomers may represent an intermediate stage on the path to fibril formation. Copper binding may promote oligomerization. Interacts with GRB2, APP, ERI3/PRNPIP and SYN1. Mislocalized cytosolically exposed PrP interacts with MGRN1; this interaction alters MGRN1 subcellular location and causes lysosomal enlargement. Interacts with APP. Interacts with KIAA1191. Interacts with ADGRG6.

The protein resides in the cell membrane. Its subcellular location is the golgi apparatus. Its function is as follows. Its primary physiological function is unclear. May play a role in neuronal development and synaptic plasticity. May be required for neuronal myelin sheath maintenance. May promote myelin homeostasis through acting as an agonist for ADGRG6 receptor. May play a role in iron uptake and iron homeostasis. Soluble oligomers are toxic to cultured neuroblastoma cells and induce apoptosis (in vitro). Association with GPC1 (via its heparan sulfate chains) targets PRNP to lipid rafts. Also provides Cu(2+) or Zn(2+) for the ascorbate-mediated GPC1 deaminase degradation of its heparan sulfate side chains. In Gorilla gorilla gorilla (Western lowland gorilla), this protein is Major prion protein (PRNP).